Here is an 865-residue protein sequence, read N- to C-terminus: Leucine-rich repeat-containing protein 66 (865 aa).

A helical membrane pass occupies residues 4-24 (FYARVTVMVTGLCFVGTVTNP). The N-linked (GlcNAc...) asparagine glycan is linked to Asn42. LRR repeat units lie at residues 138-160 (RLKV…WKLK), 161-182 (PLCS…GFHG), 185-206 (QLKS…AFKG), 209-230 (KLQV…VTIA), and 235-255 (NLEL…ANFQ). Asn248 is a glycosylation site (N-linked (GlcNAc...) asparagine). Residues 366–386 (ALAVCLSVFITFVVAFCLGAF) traverse the membrane as a helical segment. Disordered regions lie at residues 463 to 522 (RMLG…PGQH) and 654 to 749 (DTPS…AESV). Residues 470–479 (MDPSSQQSPG) are compositionally biased toward polar residues. Over residues 675-688 (AVQRDASFDPHDDL) the composition is skewed to basic and acidic residues. Positions 702–713 (FTLSSEGSQDTR) are enriched in polar residues. Phosphoserine is present on residues Ser714 and Ser748. In terms of domain architecture, LRRNT spans 728-759 (SQPLPSRNLGEYKDSVTSAESVEDITSQQTLE). N-linked (GlcNAc...) asparagine glycosylation occurs at Asn787. A disordered region spans residues 840-865 (FPNIDSSPSPPCSDQDPSDPEEHDTK). Positions 855-865 (DPSDPEEHDTK) are enriched in acidic residues.

Its subcellular location is the membrane. In Rattus norvegicus (Rat), this protein is Leucine-rich repeat-containing protein 66 (Lrrc66).